We begin with the raw amino-acid sequence, 237 residues long: Ribosomal RNA small subunit methyltransferase G (237 aa).

Residues G78, F83, 129–130, and R148 each bind S-adenosyl-L-methionine; that span reads AE.

The protein belongs to the methyltransferase superfamily. RNA methyltransferase RsmG family.

It is found in the cytoplasm. Specifically methylates the N7 position of a guanine in 16S rRNA. The sequence is that of Ribosomal RNA small subunit methyltransferase G from Clostridium kluyveri (strain ATCC 8527 / DSM 555 / NBRC 12016 / NCIMB 10680 / K1).